Here is a 195-residue protein sequence, read N- to C-terminus: Ubiquitin-conjugating enzyme E2 T (195 aa).

Residues 2–152 form the UBC core domain; sequence QRTSRLKREL…ARQWTEKHAR (151 aa). Cys-86 functions as the Glycyl thioester intermediate in the catalytic mechanism. Residue Lys-91 forms a Glycyl lysine isopeptide (Lys-Gly) (interchain with G-Cter in ubiquitin) linkage. Basic and acidic residues predominate over residues 146–157; that stretch reads WTEKHARQKTDE. Positions 146-195 are disordered; it reads WTEKHARQKTDEEGMPGSLPEVGGSEGPSAAQKRKAGQLSSGGKRFCPDV. Lys-180 participates in a covalent cross-link: Glycyl lysine isopeptide (Lys-Gly) (interchain with G-Cter in ubiquitin). Lys-189 is covalently cross-linked (Glycyl lysine isopeptide (Lys-Gly) (interchain with G-Cter in SUMO2)).

It belongs to the ubiquitin-conjugating enzyme family. Interacts with FANCL and BRCA1. Post-translationally, auto-ubiquitinated. Effects of auto-monoubiquitination at Lys-91 and Lys-180 are unclear.

The protein resides in the nucleus. It catalyses the reaction S-ubiquitinyl-[E1 ubiquitin-activating enzyme]-L-cysteine + [E2 ubiquitin-conjugating enzyme]-L-cysteine = [E1 ubiquitin-activating enzyme]-L-cysteine + S-ubiquitinyl-[E2 ubiquitin-conjugating enzyme]-L-cysteine.. It participates in protein modification; protein ubiquitination. In terms of biological role, accepts ubiquitin from the E1 complex and catalyzes its covalent attachment to other proteins. Catalyzes monoubiquitination. Involved in mitomycin-C (MMC)-induced DNA repair: acts as a specific E2 ubiquitin-conjugating enzyme for the Fanconi anemia complex by associating with E3 ubiquitin-protein ligase FANCL and catalyzing monoubiquitination of FANCD2, a key step in the DNA damage pathway. Also mediates monoubiquitination of FANCL and FANCI. May contribute to ubiquitination and degradation of BRCA1. In vitro able to promote polyubiquitination using all 7 ubiquitin Lys residues, but may prefer 'Lys-11'-, 'Lys-27'-, 'Lys-48'- and 'Lys-63'-linked polyubiquitination. The protein is Ubiquitin-conjugating enzyme E2 T (UBE2T) of Bos taurus (Bovine).